Here is a 98-residue protein sequence, read N- to C-terminus: NADH-ubiquinone oxidoreductase chain 4L (98 aa).

Transmembrane regions (helical) follow at residues 1–21 (MLPIHLNLTVAFFLALAGVLI), 29–49 (TLLCLEGMMLSLFILMALMIT), and 59–79 (IPLILLVFSACEAGVGLALLV).

This sequence belongs to the complex I subunit 4L family. Core subunit of respiratory chain NADH dehydrogenase (Complex I) which is composed of 45 different subunits.

It localises to the mitochondrion inner membrane. It carries out the reaction a ubiquinone + NADH + 5 H(+)(in) = a ubiquinol + NAD(+) + 4 H(+)(out). In terms of biological role, core subunit of the mitochondrial membrane respiratory chain NADH dehydrogenase (Complex I) which catalyzes electron transfer from NADH through the respiratory chain, using ubiquinone as an electron acceptor. Part of the enzyme membrane arm which is embedded in the lipid bilayer and involved in proton translocation. This chain is NADH-ubiquinone oxidoreductase chain 4L (MT-ND4L), found in Phascogale tapoatafa (Common wambenger).